A 59-amino-acid chain; its full sequence is Beta-defensin 134 (59 aa).

Residues 1-19 (MKPLLVVFVFLFLWDPVLA) form the signal peptide. 3 disulfide bridges follow: Cys25-Cys51, Cys31-Cys45, and Cys35-Cys52.

This sequence belongs to the beta-defensin family.

The protein localises to the secreted. Functionally, has antibacterial activity. This is Beta-defensin 134 (DEFB134) from Pan troglodytes (Chimpanzee).